A 541-amino-acid polypeptide reads, in one-letter code: MPSLLVLTFSPCVLLGWALLAGGTGGGGVGGGGGGAGIGGGRQEREALPPQKIEVLVLLPQDDSYLFSLTRVRPAIEYALRSVEGNGTGRRLLPPGTRFQVAYEDSDCGNRALFSLVDRVAAARGAKPDLILGPVCEYAAAPVARLASHWDLPMLSAGALAAGFQHKDSEYSHLTRVAPAYAKMGEMMLALFRHHHWSRAALVYSDDKLERNCYFTLEGVHEVFQEEGLHTSIYSFDETKDLDLEDIVRNIQASERVVIMCASSDTIRSIMLVAHRHGMTSGDYAFFNIELFNSSSYGDGSWKRGDKHDFEAKQAYSSLQTVTLLRTVKPEFEKFSMEVKSSVEKQGLNMEDYVNMFVEGFHDAILLYVLALHEVLRAGYSKKDGGKIIQQTWNRTFEGIAGQVSIDANGDRYGDFSVIAMTDVEAGTQEVIGDYFGKEGRFEMRPNVKYPWGPLKLRIDENRIVEHTNSSPCKSSGGLEESAVTGIVVGALLGAGLLMAFYFFRKKYRITIERRTQQEESNLGKHRELREDSIRSHFSVA.

The signal sequence occupies residues 1-26; it reads MPSLLVLTFSPCVLLGWALLAGGTGG. Over 27 to 481 the chain is Extracellular; the sequence is GGVGGGGGGA…PCKSSGGLEE (455 aa). Asn-86 is a glycosylation site (N-linked (GlcNAc...) (complex) asparagine). Chloride is bound by residues Ser-106, Val-135, and Cys-136. 2 disulfides stabilise this stretch: Cys-108-Cys-136 and Cys-213-Cys-261. A glycan (N-linked (GlcNAc...) (high mannose) asparagine) is linked at Asn-293. An N-linked (GlcNAc...) (complex) asparagine glycan is attached at Asn-394. The helical transmembrane segment at 482–504 threads the bilayer; it reads SAVTGIVVGALLGAGLLMAFYFF. Over 505-541 the chain is Cytoplasmic; the sequence is RKKYRITIERRTQQEESNLGKHRELREDSIRSHFSVA.

The protein belongs to the ANF receptor family. Homodimer; disulfide-linked. Dimers can also be formed through the C-terminal cysteine of isoform 2. Interacts with OSTN.

It is found in the cell membrane. Receptor for the natriuretic peptide hormones, binding with similar affinities atrial natriuretic peptide NPPA/ANP, brain natriuretic peptide NPPB/BNP, and C-type natriuretic peptide NPPC/CNP. May function as a clearance receptor for NPPA, NPPB and NPPC, regulating their local concentrations and effects. Acts as a regulator of osteoblast differentiation and bone growth by binding to its ligand osteocrin, thereby preventing binding between NPR3/NPR-C and natriuretic peptides, leading to increase cGMP production. The polypeptide is Atrial natriuretic peptide receptor 3 (NPR3) (Homo sapiens (Human)).